Here is a 108-residue protein sequence, read N- to C-terminus: UPF0060 membrane protein DSY4629 (108 aa).

The next 4 helical transmembrane spans lie at 5–25 (IILF…VWLW), 31–51 (PFWY…IPTL), 60–80 (VYAA…WGID), and 86–106 (NYDW…LWAP).

Belongs to the UPF0060 family.

It is found in the cell membrane. The protein is UPF0060 membrane protein DSY4629 of Desulfitobacterium hafniense (strain Y51).